The following is a 346-amino-acid chain: tRNA N6-adenosine threonylcarbamoyltransferase (346 aa).

The Fe cation site is built by histidine 111 and histidine 115. Residues 134 to 138 (LVSGG), aspartate 167, glycine 180, and asparagine 277 contribute to the substrate site. Position 305 (aspartate 305) interacts with Fe cation.

It belongs to the KAE1 / TsaD family. Fe(2+) is required as a cofactor.

It localises to the cytoplasm. The catalysed reaction is L-threonylcarbamoyladenylate + adenosine(37) in tRNA = N(6)-L-threonylcarbamoyladenosine(37) in tRNA + AMP + H(+). Its function is as follows. Required for the formation of a threonylcarbamoyl group on adenosine at position 37 (t(6)A37) in tRNAs that read codons beginning with adenine. Is involved in the transfer of the threonylcarbamoyl moiety of threonylcarbamoyl-AMP (TC-AMP) to the N6 group of A37, together with TsaE and TsaB. TsaD likely plays a direct catalytic role in this reaction. This Bordetella parapertussis (strain 12822 / ATCC BAA-587 / NCTC 13253) protein is tRNA N6-adenosine threonylcarbamoyltransferase.